Here is a 356-residue protein sequence, read N- to C-terminus: Leucine-rich repeat and transmembrane domain-containing protein 1 (356 aa).

The signal sequence occupies residues 1 to 32 (MLNEGLCCGAWAMKGTLLLVSSVGLLLPGVGS). The 30-residue stretch at 33-62 (CPMKCLCHPSSNSVDCSGQGLSKVPRDLPP) folds into the LRRNT domain. At 33–299 (CPMKCLCHPS…PTNLRHAVAT (267 aa)) the chain is on the extracellular side. LRR repeat units follow at residues 63 to 84 (WTVT…AFQS), 87 to 108 (LLST…AFYG), 111 to 132 (HLRV…FAHA), 135 to 156 (GLRE…LGKP), and 159 to 180 (NLTV…LLEA). N92 and N116 each carry an N-linked (GlcNAc...) asparagine glycan. N159 carries an N-linked (GlcNAc...) asparagine glycan. The LRRCT domain maps to 192–246 (NPWICDCHLLGLKLWLERFTFQGGETDGAICRLPEPWQGKALLSIPHELYQPCSL). Residues 255 to 277 (LVQQPGSAPQDAQKSHENSSGQQ) are compositionally biased toward polar residues. Residues 255 to 288 (LVQQPGSAPQDAQKSHENSSGQQDPLECEAKPKP) are disordered. The chain crosses the membrane as a helical span at residues 300–320 (VVITGVVCGIVCLMMLAAAIY). Residues 321 to 356 (GCTYAAITAQYQGRPLASARKSEKMGSKELMDSSSA) are Cytoplasmic-facing.

Its subcellular location is the membrane. This Mus musculus (Mouse) protein is Leucine-rich repeat and transmembrane domain-containing protein 1 (Lrtm1).